Consider the following 728-residue polypeptide: Sodium-dependent transporter snf-5 (728 aa).

Over 1–84 (MADSGSNEEA…PEEEEEKRDG (84 aa)) the chain is Cytoplasmic. The segment at 1–84 (MADSGSNEEA…PEEEEEKRDG (84 aa)) is disordered. Composition is skewed to low complexity over residues 29–50 (QQVS…STQS) and 60–73 (KNTT…TLDT). Residues 85 to 105 (FGNSFEFVLTSLGLAVGLGNI) form a helical membrane-spanning segment. Na(+)-binding residues include Gly97, Ala99, Val100, and Asn104. Residues 106-119 (WRFPTRAYNNGGSA) lie on the Extracellular side of the membrane. The helical transmembrane segment at 120 to 140 (FLIPYLTCAFLFGLPAVYFEF) threads the bilayer. Over 141–162 (LTGQYQGKSPPVIFRRVRPILE) the chain is Cytoplasmic. Residues 163-183 (GVGWMGVFVAALVAIYYIVIV) traverse the membrane as a helical segment. The Extracellular segment spans residues 184 to 285 (SWISIYMINI…PSSGMLDFGG (102 aa)). Cys204 and Cys214 form a disulfide bridge. 5 N-linked (GlcNAc...) asparagine glycosylation sites follow: Asn210, Asn225, Asn232, Asn237, and Asn257. The helical transmembrane segment at 286-306 (FNWPVFAAMSVCWLLTGLGIL) threads the bilayer. The Cytoplasmic segment spans residues 307-314 (KGAKIMGK). A helical transmembrane segment spans residues 315–335 (ISYVSVLVPYVLVVVLFINGV). Residues 336–364 (FQDGSGVGLEMYFGTPNYTKLYEQDTWTE) lie on the Extracellular side of the membrane. Asn352 carries N-linked (GlcNAc...) asparagine glycosylation. The chain crosses the membrane as a helical span at residues 365-386 (ALKQLCFSLSVGHGGLISLSSY). Ser372 lines the Na(+) pocket. The Cytoplasmic segment spans residues 387–396 (SPKRNNIFRD). The helical transmembrane segment at 397-417 (ALIVIIGDTTMSLVGGGAVFA) threads the bilayer. Residues 418 to 451 (TLGYLAKATGQDVKDVVKSGLSLAFVVYPEAMTR) lie on the Extracellular side of the membrane. A helical transmembrane segment spans residues 452–472 (MPVPWLWCFIFFLMLFLLGAS). Na(+) is bound at residue Leu469. Over 473-495 (TEIALVDVFCSCIYDQYPRFRNR) the chain is Cytoplasmic. The helical transmembrane segment at 496–516 (KWIVVIAWCSVLYCIGLVFST) threads the bilayer. Topologically, residues 517-531 (RAGYYWFEMFDEYAA) are extracellular. Residues 532 to 552 (GFSSVCTVVCELLVMMYIYGF) traverse the membrane as a helical segment. The Cytoplasmic segment spans residues 553 to 578 (RNVRDDITEVVGHARNKFTGAIGAHS). A helical membrane pass occupies residues 579–599 (WYFTANWMVISPSIALILVGL). Topologically, residues 600-616 (SFVREYPYMGRHDIYPA) are extracellular. Residues 617–637 (VFDIFGWFLSFLPVIIVPIFM) traverse the membrane as a helical segment. Residues 638–728 (LLNFIRCRNR…DTSSTYHQVY (91 aa)) are Cytoplasmic-facing. Over residues 687–699 (PWDEENVDLTDSE) the composition is skewed to acidic residues. Residues 687 to 728 (PWDEENVDLTDSESESRNAASGDVPIDDVATIDTSSTYHQVY) are disordered. Positions 718-728 (IDTSSTYHQVY) are enriched in polar residues.

It belongs to the sodium:neurotransmitter symporter (SNF) (TC 2.A.22) family. Expressed in the INT-9 cells and posterior cells of the alimentary canal of the intestine, gut epithelial cells, the pharynx of some worms, two cells of the rectal gland, and in DVA, DVB and DVC neurons and amphid sensory neurons ASI, ADF and ASK neurons.

The protein resides in the cell membrane. In terms of biological role, sodium-dependent amino acid transporter that mediates the uptake of the L-enantiomers of various amino acids, including L-proline and L-methionine, and also of acidic amino acids such as L-glutamic acid and L-aspartic acid. May additionally have a role in potassium-dependent amino acid absorption. In response to the availability of amino acid nutrients, may play a role in dauer formation. May play a role in promoting fertility. In Caenorhabditis elegans, this protein is Sodium-dependent transporter snf-5.